A 172-amino-acid polypeptide reads, in one-letter code: UBA-like domain-containing protein 2 (172 aa).

A compositionally biased stretch (pro residues) spans 118 to 130; that stretch reads PPNQQPVWLPPSS. The disordered stretch occupies residues 118–172; that stretch reads PPNQQPVWLPPSSPTGHHTLHHHHHHMHPPPSWPPVSQPANGPQTPVISALHGQR. Positions 135-145 are enriched in basic residues; sequence HTLHHHHHHMH.

The protein belongs to the UBALD family.

This is UBA-like domain-containing protein 2 (ubald2) from Danio rerio (Zebrafish).